The primary structure comprises 363 residues: Chorismate synthase (363 aa).

Residues 44–63 (DLDRRKPGTSRHTTQRQEPD) are disordered. R48 and R54 together coordinate NADP(+). Residues 125–127 (RSS), 237–238 (NA), G277, 292–296 (KATSS), and R318 each bind FMN.

It belongs to the chorismate synthase family. As to quaternary structure, homotetramer. It depends on FMNH2 as a cofactor.

The catalysed reaction is 5-O-(1-carboxyvinyl)-3-phosphoshikimate = chorismate + phosphate. The protein operates within metabolic intermediate biosynthesis; chorismate biosynthesis; chorismate from D-erythrose 4-phosphate and phosphoenolpyruvate: step 7/7. In terms of biological role, catalyzes the anti-1,4-elimination of the C-3 phosphate and the C-6 proR hydrogen from 5-enolpyruvylshikimate-3-phosphate (EPSP) to yield chorismate, which is the branch point compound that serves as the starting substrate for the three terminal pathways of aromatic amino acid biosynthesis. This reaction introduces a second double bond into the aromatic ring system. This chain is Chorismate synthase, found in Pseudomonas fluorescens (strain SBW25).